The following is a 280-amino-acid chain: MMETNSRVVVGEGAGQVVFSQKERLTLIAGPCQMESREHAFMIAGELVELCRSLGLGLVYKSSFDKANRTSLSGKRGIGLDKAMEVFADLKREFGFPVLTDIHTEEQCAAVAETVDILQIPAFLSRQTDLLVAAAKTGRTINVKKGQFLAPWDMKNVLAKFTESGNPNVLLCERGASFGYNTLVSDMRSLPIMAALGAPVVFDATHSVQQPGGQGGSTGGQREFVETLARAAVAVGVAGVFVETHEDPDNAPSDGPNMVPLKDMPRLLEKLLAFDAVAKA.

The protein belongs to the KdsA family.

It is found in the cytoplasm. The catalysed reaction is D-arabinose 5-phosphate + phosphoenolpyruvate + H2O = 3-deoxy-alpha-D-manno-2-octulosonate-8-phosphate + phosphate. The protein operates within carbohydrate biosynthesis; 3-deoxy-D-manno-octulosonate biosynthesis; 3-deoxy-D-manno-octulosonate from D-ribulose 5-phosphate: step 2/3. It functions in the pathway bacterial outer membrane biogenesis; lipopolysaccharide biosynthesis. In Rhizobium meliloti (strain 1021) (Ensifer meliloti), this protein is 2-dehydro-3-deoxyphosphooctonate aldolase.